Reading from the N-terminus, the 333-residue chain is Ornithine carbamoyltransferase (333 aa).

Carbamoyl phosphate is bound by residues 56-59, Gln-83, Arg-107, and 134-137; these read STRT and HPTQ. Residues Asn-167, Asp-231, and 235–236 contribute to the L-ornithine site; that span reads SM. Carbamoyl phosphate contacts are provided by residues 273 to 274 and Arg-318; that span reads CL.

The protein belongs to the aspartate/ornithine carbamoyltransferase superfamily. OTCase family.

It is found in the cytoplasm. It catalyses the reaction carbamoyl phosphate + L-ornithine = L-citrulline + phosphate + H(+). The protein operates within amino-acid biosynthesis; L-arginine biosynthesis; L-arginine from L-ornithine and carbamoyl phosphate: step 1/3. In terms of biological role, reversibly catalyzes the transfer of the carbamoyl group from carbamoyl phosphate (CP) to the N(epsilon) atom of ornithine (ORN) to produce L-citrulline. The protein is Ornithine carbamoyltransferase (argF) of Staphylococcus aureus (strain COL).